The sequence spans 239 residues: Serine protease SplD (239 aa).

Positions Met-1–Ala-36 are cleaved as a signal peptide. Residues His-75, Asp-114, and Ser-192 each act as charge relay system in the active site.

It belongs to the peptidase S1B family.

The protein localises to the secreted. This chain is Serine protease SplD (splD), found in Staphylococcus aureus (strain Mu3 / ATCC 700698).